The chain runs to 461 residues: METLFNGTLALVGRDQESTGFAWWAGNARLINLSGKLLGAHVAHAGLIVFWAGAMNLFEVAHFVPEKPMYEQGLILLPHLATLGWGVGPGGEVLDTFPYFVSGVLHLISSAVLGFGGIYHALLGPETLEESFPFFGYVWKDRNKMTTILGIHLILLGIGAFLLVFKALYFGGVYDTWAPGGGDVRKISNLTLSPSILFGYLLKSPFGGEGWIVSVDDLEDIIGGHVWLGSICIFGGIWHILTKPFAWARRALVWSGEAYLSYSLAAISVFGFIACCFVWFNNTAYPSEFYGPTGPEASQAQAFTFLVRDQRLGANVGSAQGPTGLGKYLMRSPTGEVIFGGETMRFWDLRAPWLEPLRGPNGLDLSRLKKDIQPWQERRSAEYMTHAPLGSLNSVGGVATEINAVNYVSPRSWLATSHFVLGFFFFVGHLWHAGRARAAAAGFEKGIDRDFEPVLSMTPLN.

Residues 1 to 2 (ME) constitute a propeptide that is removed on maturation. Position 3 is an N-acetylthreonine (T3). A Phosphothreonine modification is found at T3. 5 helical membrane passes run 57–81 (LFEVAHFVPEKPMYEQGLILLPHLA), 122–143 (LLGPETLEESFPFFGYVWKDRN), 166–188 (KALYFGGVYDTWAPGGGDVRKIS), 243–263 (KPFAWARRALVWSGEAYLSYS), and 279–300 (WFNNTAYPSEFYGPTGPEASQA). [CaMn4O5] cluster is bound at residue E355. A helical membrane pass occupies residues 435–459 (RARAAAAGFEKGIDRDFEPVLSMTP).

The protein belongs to the PsbB/PsbC family. PsbC subfamily. As to quaternary structure, PSII is composed of 1 copy each of membrane proteins PsbA, PsbB, PsbC, PsbD, PsbE, PsbF, PsbH, PsbI, PsbJ, PsbK, PsbL, PsbM, PsbT, PsbX, PsbY, PsbZ, Psb30/Ycf12, at least 3 peripheral proteins of the oxygen-evolving complex and a large number of cofactors. It forms dimeric complexes. Binds multiple chlorophylls and provides some of the ligands for the Ca-4Mn-5O cluster of the oxygen-evolving complex. It may also provide a ligand for a Cl- that is required for oxygen evolution. PSII binds additional chlorophylls, carotenoids and specific lipids. is required as a cofactor.

It localises to the plastid. Its subcellular location is the chloroplast thylakoid membrane. In terms of biological role, one of the components of the core complex of photosystem II (PSII). It binds chlorophyll and helps catalyze the primary light-induced photochemical processes of PSII. PSII is a light-driven water:plastoquinone oxidoreductase, using light energy to abstract electrons from H(2)O, generating O(2) and a proton gradient subsequently used for ATP formation. The polypeptide is Photosystem II CP43 reaction center protein (Trachelium caeruleum (Blue throatwort)).